The following is a 500-amino-acid chain: Cytochrome P450 monooxygenase hepD (500 aa).

A helical membrane pass occupies residues 15 to 35 (WILLSLSLAFIVVYSLFYLAV). Residues Asn-99, Asn-185, Asn-373, and Asn-409 are each glycosylated (N-linked (GlcNAc...) asparagine). Cys-445 provides a ligand contact to heme. Asn-482 is a glycosylation site (N-linked (GlcNAc...) asparagine).

Belongs to the cytochrome P450 family. It depends on heme as a cofactor.

The protein resides in the membrane. The protein operates within secondary metabolite biosynthesis. Cytochrome P450 monooxygenase; part of the gene cluster that mediates the biosynthesis of heptelidic acid (HA), a sesquiterpene lactone that acts as an inhibitor of glyceraldehyde-3-phosphatedehydrogenase (GAPDH) and a growth inhibitor of the salt-tolerant lactic acid bacteria in soy sauce brewing. This Aspergillus oryzae (strain ATCC 42149 / RIB 40) (Yellow koji mold) protein is Cytochrome P450 monooxygenase hepD.